A 257-amino-acid polypeptide reads, in one-letter code: Discoidin-2 (257 aa).

A beta-sandwich region spans residues 1-155 (MSVPAGSVSC…SLRWELYALP (155 aa)). One can recognise an F5/8 type C domain in the interval 10-154 (CLANALLNLR…ISLRWELYAL (145 aa)). Residues N39, S40, and D47 each contribute to the Ca(2+) site. Residues 81–83 (RGD) carry the Cell attachment site motif. Phosphohistidine is present on H84. The tract at residues 156–162 (VKSYSNP) is linker. Residues 163-257 (SVQVGEVSIG…FDYVAVEFNN (95 aa)) form a lectin-like region. 3 residues coordinate a carbohydrate: D209, R218, and W238.

As to quaternary structure, homotrimer. The N-terminus is blocked. As to expression, maturing spore cells.

Functionally, galactose-binding lectin. May be necessary for the primary process of spore formation and may be involved in spore coat formation. This is Discoidin-2 (dscE) from Dictyostelium discoideum (Social amoeba).